The chain runs to 144 residues: Maximins 1/H1 (144 aa).

The N-terminal stretch at 1 to 18 (MNFKYIVAVSFLLASAYA) is a signal peptide. Positions 19–43 (RSEENDEQSLSQRDVLEEESLREIR) are excised as a propeptide. N70 carries the asparagine amide modification. The propeptide occupies 74 to 123 (TAEEHEVMKRLEAVMRDLDSLDYPEEAAERETRSFNQEEIANLFTKKEKR). L143 carries the post-translational modification Leucine amide.

The protein belongs to the bombinin family. Expressed by the skin glands.

The protein localises to the secreted. In terms of biological role, antibacterial peptide with amphipathic alpha-helical structure that has activity against both Gram-positive and Gram-negative bacteria. Also shows antimicrobial activity against the fungus C.albicans, but not against A.flavus nor P.uticale. It has little hemolytic activity. It possess a significant cytotoxicity against tumor cell lines, but does not possess a significant anti-HIV activity. Also shows high spermicidal activity. Its function is as follows. antibacterial peptide with activity against both Gram-positive and Gram-negative bacteria. Also shows antimicrobial activity against the fungus C.albicans. In addition, shows strong hemolytic activity. The chain is Maximins 1/H1 from Bombina maxima (Giant fire-bellied toad).